The chain runs to 1097 residues: MDTCVETFFNPYLRRKPRRDWRRCEDNNKNFLQVVPRGVLYDGATGLIKVQSGMEPRMFYAEKEYVLNPDKPWPTLRTRGWCRGPYSDDVRFHTYDQVVNLVLADSDEQISPRWNSHVVPAGNVIRMFGATDEGVSVCVNVFGQKAYFYCERMQSEDLKNTVYDIADKVPEPCSPFSVSISPVTKSSFYGYGLGHIPNLYRLSFNNWNMCRKIGKRMLEEGRKVYELGVDPLARFLIDRKIPSFGWCLARRYSVRAAGYVSRAQLEIDCDVADILPIEEQSNWPFYRCLSFDIECMSGTGAFPAAENVDDIIIQISCVCFGVGEMVHHAYDVHADLSTPAVPENHLFTIGPCAPIPDVKIYTFPSEYEMLRGFFIFLSWYSPEFITGYNINGFDIKYILTRAEKLYKMDVGQFTKLRRGGRMFVFSPEKGKAGFGTSNTVKVFWSGTVVLDMYPVCTAKASSPNYKLDTMAEIYLKKKKDDLSYKEIPVQFSAGDEGRAPGGKYCLQDAVLVRELFEMLAFHFEAAAIARLARIPLRKVIFDGQQIRIYTCLLEECSGRDMILPNMPSLGHGAAAAIEEAAAGGEGDETSEGENSNNSRTVGYQGATVLEPECGFHHVPVCVFDFASLYPSIIMSNNLCYSTLLVEGSPEVPEKDVLRVEIGDQCHRFVRENVHRSLLAELLVRWLTQRKLVREAMKQCTNEMQRMIMDKQQLALKVTCNAFYGFTGVAAGMLPCLPIAASITKIGRDMLLATAGHIEDRCNRPDFLRTVLGLPPEAIDPEALRVKIIYGDTDSVFAAFYGIDKEALLKAVGALAANVTNALFKEPVRLEFEKMFVSLMMICKKRYIGKVHGSQNLSMKGVDLVRRTACGFVKAVVSDVLHMVFNDETVSEGTMKLSRMTFDDLKKNGIPCEFGPVVSRLCRARDDLHLKKVPVPELTLSSVLSQELSCYKQKNLPHLAVIRRLAARKEELPAVGDRVEYVLTLPDGCKKNVPNYEIAEDPRHVVEAKLSINAEKYYEQVVKAVTNTLMPVFPRDMPKREKFFSLVVPQRIYIPDQFLHLCGNVNELARGGDDSDGGDSEKENMDTERSSSHEAMET.

A disordered region spans residues arginine 1069–threonine 1097. A compositionally biased stretch (basic and acidic residues) spans aspartate 1078–threonine 1097.

This sequence belongs to the DNA polymerase type-B family.

The protein localises to the host nucleus. The catalysed reaction is DNA(n) + a 2'-deoxyribonucleoside 5'-triphosphate = DNA(n+1) + diphosphate. This is DNA polymerase catalytic subunit (UL54) from Murid herpesvirus 1 (strain Smith) (MuHV-1).